Consider the following 718-residue polypeptide: Effector protein hopM1 (718 aa).

The segment covering 1–10 (MIGTRVGGSG) has biased composition (gly residues). Disordered regions lie at residues 1–63 (MIGT…ARLP) and 683–718 (GVSS…GRRR). The span at 11-22 (STEIVQANQPQP) shows a compositional bias: polar residues. The segment covering 44–60 (ASQSAAQAPESSAAGAA) has biased composition (low complexity).

As to quaternary structure, interacts with the chaperone ShcM.

It localises to the secreted. Its subcellular location is the host membrane. Its function is as follows. Involved in the suppression of basal resistance and promotion of disease symptoms in plants. May be involved in the inhibition of a host vesicle trafficking pathway. This is Effector protein hopM1 (hopM1) from Pseudomonas syringae pv. syringae (strain B728a).